Reading from the N-terminus, the 41-residue chain is Competence-stimulating peptide type 1 (41 aa).

The propeptide occupies 1-24 (MKNTVKLEQFVALKEKDLQKIKGG).

This sequence belongs to the ComC family.

It localises to the secreted. Acts as a pheromone, induces cells to develop competence for genetic transformation. The sequence is that of Competence-stimulating peptide type 1 (comC1) from Streptococcus pneumoniae.